Here is a 74-residue protein sequence, read N- to C-terminus: Kappa-scoloptoxin(07)-Ssm2d (74 aa).

The signal sequence occupies residues 1-19 (MLVFYALLFVTVFSNTVMG). The propeptide occupies 20–41 (ATIDKPIPKPILREAIEEIEVN).

This sequence belongs to the scoloptoxin-07 family. Contains 3 disulfide bonds. In terms of tissue distribution, expressed by the venom gland.

It is found in the secreted. In terms of biological role, inhibits voltage-gated potassium channels. The sequence is that of Kappa-scoloptoxin(07)-Ssm2d from Scolopendra mutilans (Chinese red-headed centipede).